The chain runs to 378 residues: Mannitol-1-phosphate 5-dehydrogenase (378 aa).

Position 4–15 (4–15 (SVHFGAGNIGRG)) interacts with NAD(+).

Belongs to the mannitol dehydrogenase family.

The enzyme catalyses D-mannitol 1-phosphate + NAD(+) = beta-D-fructose 6-phosphate + NADH + H(+). The protein is Mannitol-1-phosphate 5-dehydrogenase of Streptococcus pneumoniae serotype 4 (strain ATCC BAA-334 / TIGR4).